The primary structure comprises 372 residues: MHNQAPIQRRKSKRIYVGNVPIGDGAPIAVQSMTNTRTTDVEATVNQIKALERVGADIVRVSVPTMDAAEAFKLIKQQVNVPLVADIHFDYRIALKVAEYGVDCLRINPGNIGNEERIRTVVDCARDKNIPIRIGVNAGSLEKDLQEKYGEPTPQALLESAMRHVDHLDRLNFDQFKVSVKASDVFLAVESYRLLAKQIEQPLHLGITEAGGARSGAVKSAIGLGLLLSEGIGDTLRVSLAADPVEEIKVGFDILKSLRIRARGINFIACPTCSRQEFDVIGTVNALEQRLEDIITPMDVSIIGCVVNGPGEALVSTLGVTGGNKKSGLYEDGVRKDRLDNDDMITQLEARIRAKASIMDEARRIDVQQVEK.

[4Fe-4S] cluster-binding residues include C270, C273, C305, and E312.

The protein belongs to the IspG family. It depends on [4Fe-4S] cluster as a cofactor.

It carries out the reaction (2E)-4-hydroxy-3-methylbut-2-enyl diphosphate + oxidized [flavodoxin] + H2O + 2 H(+) = 2-C-methyl-D-erythritol 2,4-cyclic diphosphate + reduced [flavodoxin]. It functions in the pathway isoprenoid biosynthesis; isopentenyl diphosphate biosynthesis via DXP pathway; isopentenyl diphosphate from 1-deoxy-D-xylulose 5-phosphate: step 5/6. In terms of biological role, converts 2C-methyl-D-erythritol 2,4-cyclodiphosphate (ME-2,4cPP) into 1-hydroxy-2-methyl-2-(E)-butenyl 4-diphosphate. In Citrobacter koseri (strain ATCC BAA-895 / CDC 4225-83 / SGSC4696), this protein is 4-hydroxy-3-methylbut-2-en-1-yl diphosphate synthase (flavodoxin).